Reading from the N-terminus, the 761-residue chain is Ribonucleoside-diphosphate reductase subunit alpha (761 aa).

Positions Leu5–Gly95 constitute an ATP-cone domain. Residues Lys9, Glu15–Lys21, Thr55, and Lys91 contribute to the ATP site. Thr209 serves as a coordination point for GDP. Cys225 and Cys462 are oxidised to a cystine. Residues Asp232–Leu234, Arg262, and Arg269 contribute to the dTTP site. Position 437 (Asn437) interacts with GDP. Asn437 functions as the Proton acceptor in the catalytic mechanism. Cys439 acts as the Cysteine radical intermediate in catalysis. Residues Glu441 and Glu623 to Ser625 contribute to the GDP site. Residue Glu441 is the Proton acceptor of the active site.

Belongs to the ribonucleoside diphosphate reductase large chain family. Tetramer of two alpha and two beta subunits.

It carries out the reaction a 2'-deoxyribonucleoside 5'-diphosphate + [thioredoxin]-disulfide + H2O = a ribonucleoside 5'-diphosphate + [thioredoxin]-dithiol. Its activity is regulated as follows. Under complex allosteric control mediated by deoxynucleoside triphosphates and ATP binding to separate specificity and activation sites on the alpha subunit. The type of nucleotide bound at the specificity site determines substrate preference. It seems probable that ATP makes the enzyme reduce CDP and UDP, dGTP favors ADP reduction and dTTP favors GDP reduction. Stimulated by ATP and inhibited by dATP binding to the activity site. In terms of biological role, provides the precursors necessary for DNA synthesis. Catalyzes the biosynthesis of deoxyribonucleotides from the corresponding ribonucleotides. This is Ribonucleoside-diphosphate reductase subunit alpha (nrdA) from Buchnera aphidicola subsp. Acyrthosiphon pisum (strain APS) (Acyrthosiphon pisum symbiotic bacterium).